The primary structure comprises 573 residues: Probable D-xylulose kinase A (573 aa).

Substrate is bound by residues H100, R171, D287, and N288. Residues W368, 473–474, and N477 contribute to the ATP site; that span reads GG.

It belongs to the FGGY kinase family.

It is found in the cytoplasm. It catalyses the reaction D-xylulose + ATP = D-xylulose 5-phosphate + ADP + H(+). In terms of biological role, highly specific D-xylulose kinase which participates in the catabolism of xylose. Xylose is a major component of hemicelluloses such as xylan. Most fungi utilize D-xylose via three enzymatic reactions, xylose reductase (XR), xylitol dehydrogenase (XDH), and xylulokinase, to form xylulose 5-phosphate, which enters pentose phosphate pathway. In Aspergillus terreus (strain NIH 2624 / FGSC A1156), this protein is Probable D-xylulose kinase A (xkiA).